A 245-amino-acid polypeptide reads, in one-letter code: MHIVYDDVRDLKAIIQALLKLVDEALFDIKPEGIQLVAIDKAHISLIKIELPKEMFKEYDVPEEFKFGFNTQYMSKLLKAAKRKEEIIIDADSPEVVKLTLSGALNRVFNVNNIEVLPPEVPEVNLEFDIKATINASGLKNAIGEIAEVADTLLISGNEEKVVVKGEGENKVEVEFSKDTGSLADIEFNKESSSAYDVEYLNDIISLTKLSDYVKVAFADQKPMQLEFNMEGGGKVTYLLAPKLS.

This sequence belongs to the PCNA family. As to quaternary structure, the subunits circularize to form a toroid; DNA passes through its center. Replication factor C (RFC) is required to load the toroid on the DNA. Forms a dimeric complex with PCNA3 and a trimeric complex with PCNA2 and PCNA3; does not form homotrimers.

In terms of biological role, sliding clamp subunit that acts as a moving platform for DNA processing. Responsible for tethering the catalytic subunit of DNA polymerase and other proteins to DNA during high-speed replication. The trimeric complex inhibits DNA ligase and both 3'-5' and 5'-3' activity of Hel308 (Hjm) helicase, but stimulates Hjc, the Holliday junction cleavage enzyme. This chain is DNA polymerase sliding clamp 1, found in Sulfurisphaera tokodaii (strain DSM 16993 / JCM 10545 / NBRC 100140 / 7) (Sulfolobus tokodaii).